Here is a 67-residue protein sequence, read N- to C-terminus: DNA-directed RNA polymerase subunit omega (67 aa).

It belongs to the RNA polymerase subunit omega family. The RNAP catalytic core consists of 2 alpha, 1 beta, 1 beta' and 1 omega subunit. When a sigma factor is associated with the core the holoenzyme is formed, which can initiate transcription.

The catalysed reaction is RNA(n) + a ribonucleoside 5'-triphosphate = RNA(n+1) + diphosphate. Its function is as follows. Promotes RNA polymerase assembly. Latches the N- and C-terminal regions of the beta' subunit thereby facilitating its interaction with the beta and alpha subunits. The protein is DNA-directed RNA polymerase subunit omega of Methylibium petroleiphilum (strain ATCC BAA-1232 / LMG 22953 / PM1).